The sequence spans 253 residues: Sulfate transporter CysZ (253 aa).

The next 4 helical transmembrane spans lie at 31 to 51 (FVILPLLVNILLMGGAFWWLF), 75 to 95 (LLWPLAVISVLLVFGYFFSTI), 151 to 171 (IVLLILYFIPGIGQTVAPVLW), and 222 to 242 (IPLLNLFIMPVAVCGATAMWV).

This sequence belongs to the CysZ family.

It is found in the cell inner membrane. In terms of biological role, high affinity, high specificity proton-dependent sulfate transporter, which mediates sulfate uptake. Provides the sulfur source for the cysteine synthesis pathway. The sequence is that of Sulfate transporter CysZ from Escherichia coli O7:K1 (strain IAI39 / ExPEC).